Here is a 410-residue protein sequence, read N- to C-terminus: MQPPSLLLLVLGLLAAPAAALVRIPLHKFTSVRRTMTELGGPVEDLIAKGPISKYAQGAPAVTGGPIPEMLRNYMDAQYYGEIGIGTPPQCFTVVFDTGSSNLWVPSIHCKLLDIACWIHHKYNSGKSSTYVKNGTSFDIHYGSGSLSGYLSQDTVSVPCKSALSGLAGIKVERQTFGEATKQPGITFIAAKFDGILGMAYPRISVNNVLPVFDNLMQQKLVEKNIFSFYLNRDPNAQPGGELMLGGTDSKYYKGPLSYLNVTRKAYWQVHMEQVDVGSSLTLCKGGCEAIVDTGTSLIVGPVDEVRELQKAIGAVPLIQGEYMIPCEKVSTLPDVTLKLGGKLYKLSSEDYTLKVSQGGKTICLSGFMGMDIPPPGGPLWILGDVFIGCYYTVFDRDQNRVGLAQATRL.

The first 18 residues, 1–18 (MQPPSLLLLVLGLLAAPA), serve as a signal peptide directing secretion. Positions 19–64 (AALVRIPLHKFTSVRRTMTELGGPVEDLIAKGPISKYAQGAPAVTG) are cleaved as a propeptide — activation peptide. Residues 79-405 (YYGEIGIGTP…DRDQNRVGLA (327 aa)) form the Peptidase A1 domain. Intrachain disulfides connect Cys-91-Cys-160 and Cys-110-Cys-117. Asp-97 is an active-site residue. 2 N-linked (GlcNAc...) asparagine glycosylation sites follow: Asn-134 and Asn-261. Residues Cys-284 and Cys-288 are joined by a disulfide bond. Asp-293 is a catalytic residue. A disulfide bridge links Cys-327 with Cys-364.

Belongs to the peptidase A1 family. As to quaternary structure, consists of a light chain and a heavy chain. Interacts with ADAM30; this leads to activation of CTSD. Interacts with GRN; stabilizes CTSD; increases its proteolytic activity. N- and O-glycosylated. In terms of processing, undergoes proteolytic cleavage and activation by ADAM30.

The protein localises to the lysosome. It is found in the melanosome. It localises to the secreted. Its subcellular location is the extracellular space. It catalyses the reaction Specificity similar to, but narrower than, that of pepsin A. Does not cleave the 4-Gln-|-His-5 bond in B chain of insulin.. Acid protease active in intracellular protein breakdown. Plays a role in APP processing following cleavage and activation by ADAM30 which leads to APP degradation. This chain is Cathepsin D (CTSD), found in Canis lupus familiaris (Dog).